Here is a 177-residue protein sequence, read N- to C-terminus: Interleukin-1 receptor antagonist protein (177 aa).

A signal peptide spans 1 to 25 (MEICRGLRSHLITLLLFLFHSETIC). A disulfide bridge connects residues Cys91 and Cys141. Asn109 carries N-linked (GlcNAc...) asparagine glycosylation.

It belongs to the IL-1 family. As to expression, the intracellular form of IL1RN is predominantly expressed in epithelial cells.

It is found in the secreted. The protein localises to the cytoplasm. Its function is as follows. Anti-inflammatory antagonist of interleukin-1 family of proinflammatory cytokines such as interleukin-1beta/IL1B and interleukin-1alpha/IL1A. Protects from immune dysregulation and uncontrolled systemic inflammation triggered by IL1 for a range of innate stimulatory agents such as pathogens. This chain is Interleukin-1 receptor antagonist protein (IL1RN), found in Homo sapiens (Human).